A 443-amino-acid chain; its full sequence is Enolase (443 aa).

Gln-167 contributes to the (2R)-2-phosphoglycerate binding site. Glu-209 functions as the Proton donor in the catalytic mechanism. The Mg(2+) site is built by Asp-246, Glu-291, and Asp-318. The (2R)-2-phosphoglycerate site is built by Lys-343, Arg-372, Ser-373, and Lys-394. Catalysis depends on Lys-343, which acts as the Proton acceptor.

It belongs to the enolase family. In terms of assembly, component of the RNA degradosome, a multiprotein complex involved in RNA processing and mRNA degradation. Requires Mg(2+) as cofactor.

It localises to the cytoplasm. The protein localises to the secreted. The protein resides in the cell surface. The enzyme catalyses (2R)-2-phosphoglycerate = phosphoenolpyruvate + H2O. Its pathway is carbohydrate degradation; glycolysis; pyruvate from D-glyceraldehyde 3-phosphate: step 4/5. Its function is as follows. Catalyzes the reversible conversion of 2-phosphoglycerate (2-PG) into phosphoenolpyruvate (PEP). It is essential for the degradation of carbohydrates via glycolysis. This chain is Enolase, found in Wigglesworthia glossinidia brevipalpis.